A 233-amino-acid polypeptide reads, in one-letter code: Thymidylate kinase (233 aa).

ATP is bound at residue 10–17 (GVDGVGKT).

The protein belongs to the thymidylate kinase family.

The enzyme catalyses dTMP + ATP = dTDP + ADP. Functionally, phosphorylation of dTMP to form dTDP in both de novo and salvage pathways of dTTP synthesis. The chain is Thymidylate kinase from Bifidobacterium longum subsp. infantis (strain ATCC 15697 / DSM 20088 / JCM 1222 / NCTC 11817 / S12).